Here is a 240-residue protein sequence, read N- to C-terminus: tRNA (guanine-N(1)-)-methyltransferase (240 aa).

Residues Gly108 and Leu127–Leu132 each bind S-adenosyl-L-methionine.

The protein belongs to the RNA methyltransferase TrmD family. Homodimer.

Its subcellular location is the cytoplasm. The enzyme catalyses guanosine(37) in tRNA + S-adenosyl-L-methionine = N(1)-methylguanosine(37) in tRNA + S-adenosyl-L-homocysteine + H(+). In terms of biological role, specifically methylates guanosine-37 in various tRNAs. The protein is tRNA (guanine-N(1)-)-methyltransferase of Streptococcus mutans serotype c (strain ATCC 700610 / UA159).